The primary structure comprises 252 residues: Uridylate kinase (252 aa).

Residue 24–27 participates in ATP binding; sequence KLSG. The interval 32 to 37 is involved in allosteric activation by GTP; it reads GEEGFG. A UMP-binding site is contributed by Gly-66. ATP is bound by residues Gly-67 and Arg-71. Residues Asp-86 and 147-154 contribute to the UMP site; that span reads TGNPFFTT. The ATP site is built by Thr-174, Tyr-180, and Asp-183.

This sequence belongs to the UMP kinase family. As to quaternary structure, homohexamer.

Its subcellular location is the cytoplasm. The catalysed reaction is UMP + ATP = UDP + ADP. It participates in pyrimidine metabolism; CTP biosynthesis via de novo pathway; UDP from UMP (UMPK route): step 1/1. With respect to regulation, allosterically activated by GTP. Inhibited by UTP. Its function is as follows. Catalyzes the reversible phosphorylation of UMP to UDP. This is Uridylate kinase from Alcanivorax borkumensis (strain ATCC 700651 / DSM 11573 / NCIMB 13689 / SK2).